The chain runs to 572 residues: Chromatin assembly factor 1 subunit B (572 aa).

7 WD repeats span residues histidine 11–alanine 54, arginine 64–glutamine 103, glycine 127–isoleucine 166, glutamate 169–asparagine 208, phenylalanine 228–alanine 279, arginine 301–tyrosine 347, and isoleucine 351–lysine 392. A Phosphothreonine modification is found at threonine 401. The interval aspartate 403–valine 572 is disordered. The span at glutamine 411–arginine 430 shows a compositional bias: polar residues. At serine 416 the chain carries Phosphoserine. Position 426 is a phosphothreonine (threonine 426). Residues threonine 431–alanine 452 show a composition bias toward low complexity. Phosphoserine is present on serine 436. Threonine 440 carries the post-translational modification Phosphothreonine. Phosphoserine is present on residues serine 456 and serine 465. The residue at position 501 (lysine 501) is an N6-acetyllysine. Phosphothreonine is present on residues threonine 502 and threonine 510. Residues proline 511 to serine 529 are compositionally biased toward polar residues. Over residues proline 546–aspartate 559 the composition is skewed to basic and acidic residues.

The protein belongs to the WD repeat HIR1 family. In terms of assembly, subunit of the CAF-1 complex that contains RBBP4, CHAF1B and CHAF1A. CHAF1A binds directly to CHAF1B. Interacts with histones H3.1, H3.2 and H3.1t.

The protein localises to the nucleus. Its subcellular location is the cytoplasm. In terms of biological role, acts as a component of the histone chaperone complex chromatin assembly factor 1 (CAF-1), which assembles histone octamers onto DNA during replication and repair. CAF-1 performs the first step of the nucleosome assembly process, bringing newly synthesized histones H3 and H4 to replicating DNA; histones H2A/H2B can bind to this chromatin precursor subsequent to DNA replication to complete the histone octamer. This chain is Chromatin assembly factor 1 subunit B, found in Mus musculus (Mouse).